The chain runs to 222 residues: MIF4G domain-containing protein (222 aa).

Residues 3 to 205 (EPSKEEYKIQ…LEIIEFRAAG (203 aa)) enclose the MIF4G domain.

Belongs to the MIF4GD family. Interacts with EIF4G1, EIF4G2 and SLBP; probably tethered by SLBP to the 3'-end of mRNAs ending with the histone stem-loop, it also interacts with EIF4G1 which is bound to their 5'-end.

The protein resides in the cytoplasm. The protein localises to the nucleus. Functionally, functions in replication-dependent translation of histone mRNAs which differ from other eukaryotic mRNAs in that they do not end with a poly-A tail but a stem-loop. May participate in circularizing those mRNAs specifically enhancing their translation. This is MIF4G domain-containing protein (MIF4GD) from Bos taurus (Bovine).